The following is a 262-amino-acid chain: Spindlin-1 (262 aa).

The tract at residues 1–51 (MKTPFGKTPGQRSRADAGHAGVSANMMKKRTSHKKHRSSVGPSKPVSQPRR) is disordered. Glycyl lysine isopeptide (Lys-Gly) (interchain with G-Cter in SUMO2) cross-links involve residues Lys7 and Lys28. The span at 27 to 38 (MKKRTSHKKHRS) shows a compositional bias: basic residues. Lys44 is modified (N6-acetyllysine; alternate). Residue Lys44 forms a Glycyl lysine isopeptide (Lys-Gly) (interchain with G-Cter in SUMO2); alternate linkage. Residues 53-116 (IVGCRIQHGW…RVSALEVLPD (64 aa)) form a tudor-like domain 1 region. Positions 93–98 (GFDCVY) are histone H3K4me3 and H3R8me2a binding. Residues Ser109 and Ser124 each carry the phosphoserine; by AURKA modification. The interval 132 to 193 (MIGKAVEHMF…DYKEGDLRIM (62 aa)) is tudor-like domain 2. Glu142 is a region of interest (histone H3K4me3 and H3R8me2a binding). Ser199 carries the phosphoserine modification. The tract at residues 213-262 (LVGKQVEYAKEDGSKRTGMVIHQVEAKPSVYFIKFDDDFHIYVYDLVKTS) is tudor-like domain 3. Residues 250-252 (DFH) form a histone H3K4me3 and H3R8me2a binding region.

The protein belongs to the SPIN/STSY family. As to quaternary structure, homodimer; may form higher-order oligomers. Interacts with TCF7L2/TCF4; the interaction is direct. Interacts with HABP4 and SERBP1. Interacts with SPINDOC; SPINDOC stabilizes SPIN1 and enhances its association with bivalent H3K4me3K9me3 mark. Interacts with SPOCD1; promoting recruitment of PIWIL4 and SPOCD1 to transposons. Post-translationally, phosphorylated during oocyte meiotic maturation. Highly expressed in ovarian cancer tissues.

It is found in the nucleus. The protein resides in the nucleolus. In terms of biological role, chromatin reader that specifically recognizes and binds histone H3 both trimethylated at 'Lys-4' and 'Lys-9' (H3K4me3K9me3) and is involved in piRNA-mediated retrotransposon silencing during spermatogenesis. Plays a key role in the initiation of the PIWIL4-piRNA pathway, a pathway that directs transposon DNA methylation and silencing in the male embryonic germ cells, by promoting recruitment of DNA methylation machinery to transposons: binds young, but not old, LINE1 transposons, which are specifically marked with H3K4me3K9me3, and promotes the recruitment of PIWIL4 and SPOCD1 to transposons, leading to piRNA-directed DNA methylation. Also recognizes and binds histone H3 both trimethylated at 'Lys-4' and asymmetrically dimethylated at 'Arg-8' (H3K4me3 and H3R8me2a) and acts as an activator of Wnt signaling pathway downstream of PRMT2. In case of cancer, promotes cell cancer proliferation via activation of the Wnt signaling pathway. Overexpression induces metaphase arrest and chromosomal instability. Localizes to active rDNA loci and promotes the expression of rRNA genes. May play a role in cell-cycle regulation during the transition from gamete to embryo. Involved in oocyte meiotic resumption, a process that takes place before ovulation to resume meiosis of oocytes blocked in prophase I: may act by regulating maternal transcripts to control meiotic resumption. In Homo sapiens (Human), this protein is Spindlin-1.